The chain runs to 97 residues: Citrate lyase acyl carrier protein (97 aa).

Position 14 is an O-(phosphoribosyl dephospho-coenzyme A)serine (serine 14).

This sequence belongs to the CitD family. In terms of assembly, oligomer with a subunit composition of (alpha,beta,gamma)6.

The protein resides in the cytoplasm. Covalent carrier of the coenzyme of citrate lyase. The chain is Citrate lyase acyl carrier protein from Cronobacter sakazakii (strain ATCC BAA-894) (Enterobacter sakazakii).